Reading from the N-terminus, the 227-residue chain is UPF0758 protein lpp2553 (227 aa).

Residues 102–225 form the MPN domain; it reads RLSNTQQTYA…YSIFAENKWV (124 aa). Zn(2+) is bound by residues H173, H175, and D186. The JAMM motif motif lies at 173–186; sequence HNHPSGLSDASQQD.

It belongs to the UPF0758 family.

The sequence is that of UPF0758 protein lpp2553 from Legionella pneumophila (strain Paris).